We begin with the raw amino-acid sequence, 601 residues long: ATP-dependent lipid A-core flippase (601 aa).

4 consecutive transmembrane segments (helical) span residues 27–47 (IGLF…QPML), 83–103 (LLIV…NYFL), 174–194 (LLWM…LIAV), and 267–287 (PLLQ…VLYL). In terms of domain architecture, ABC transmembrane type-1 spans 31 to 322 (LISIVGFLIF…LSEVSSTIQK (292 aa)). The ABC transporter domain maps to 354 to 590 (LEVRNLSFTY…NGYYSRLHAM (237 aa)). Residue 388–395 (GRSGSGKS) participates in ATP binding.

This sequence belongs to the ABC transporter superfamily. Lipid exporter (TC 3.A.1.106) family. As to quaternary structure, homodimer.

It is found in the cell inner membrane. It carries out the reaction ATP + H2O + lipid A-core oligosaccharideSide 1 = ADP + phosphate + lipid A-core oligosaccharideSide 2.. Its function is as follows. Involved in lipopolysaccharide (LPS) biosynthesis. Translocates lipid A-core from the inner to the outer leaflet of the inner membrane. Transmembrane domains (TMD) form a pore in the inner membrane and the ATP-binding domain (NBD) is responsible for energy generation. The polypeptide is ATP-dependent lipid A-core flippase (Pseudomonas fluorescens (strain ATCC BAA-477 / NRRL B-23932 / Pf-5)).